The chain runs to 183 residues: Glutathione-regulated potassium-efflux system ancillary protein KefG (183 aa).

It belongs to the NAD(P)H dehydrogenase (quinone) family. KefG subfamily. As to quaternary structure, interacts with KefB.

It is found in the cell inner membrane. The catalysed reaction is a quinone + NADH + H(+) = a quinol + NAD(+). The enzyme catalyses a quinone + NADPH + H(+) = a quinol + NADP(+). Regulatory subunit of a potassium efflux system that confers protection against electrophiles. Required for full activity of KefB. The polypeptide is Glutathione-regulated potassium-efflux system ancillary protein KefG (Shigella flexneri serotype 5b (strain 8401)).